The sequence spans 141 residues: Terrelysin (141 aa).

This sequence belongs to the aegerolysin family.

The protein localises to the cytoplasm. In terms of biological role, hemolysins are potential virulence factors. Has hemolytic activity against sheep erythrocytes in vitro. This chain is Terrelysin, found in Aspergillus terreus (strain NIH 2624 / FGSC A1156).